Consider the following 658-residue polypeptide: Scarecrow-like protein 28 (658 aa).

3 disordered regions span residues 43-85, 96-115, and 209-265; these read PCSS…TSGC, LATT…NNNR, and PAAV…NNNR. Positions 214–228 are enriched in low complexity; that stretch reads EASGGSSTSASSESR. The GRAS domain occupies 265–654; sequence RNDLQRDFEL…QPLYTISAWT (390 aa). Positions 272 to 336 are leucine repeat I (LRI); the sequence is FELVNLLTGC…VARMWPHIFH (65 aa). Positions 355 to 420 are VHIID; sequence LRFLNQVTPI…NPPHHVRITG (66 aa). The VHIID motif lies at 386-390; it reads VHIID. The tract at residues 430 to 462 is leucine repeat II (LRII); that stretch reads ETGDRLHGFAEAMNLQFEFHPVVDRLEDVRLWM. The tract at residues 471-563 is PFYRE; sequence VAVNCVMQMH…EMLFGREIRN (93 aa). An SAW region spans residues 566-654; that stretch reads ACEGSHRQER…QPLYTISAWT (89 aa).

Belongs to the GRAS family. As to quaternary structure, interacts with SNRNP35 and CYP95. Expressed in roots and sepals.

The protein resides in the nucleus. Its function is as follows. Probable transcription factor involved in plant development. The chain is Scarecrow-like protein 28 (SCL28) from Arabidopsis thaliana (Mouse-ear cress).